The chain runs to 378 residues: Flap endonuclease 1 (378 aa).

The tract at residues 1 to 105 (MGIKGLNSII…HELDKRTERR (105 aa)) is N-domain. Mg(2+) is bound at residue Asp-34. Residues Arg-47 and Arg-71 each coordinate DNA. Positions 87, 156, 158, 177, and 179 each coordinate Mg(2+). The segment at 120-251 (EIMKHERRLV…VTALKLIKEH (132 aa)) is I-domain. Glu-156 contacts DNA. The DNA site is built by Gly-229 and Asp-231. Asp-231 lines the Mg(2+) pocket. Positions 337–345 (VQGRLDSFF) are interaction with PCNA. The span at 356–367 (AASARKAQAAKK) shows a compositional bias: low complexity. The segment at 356–378 (AASARKAQAAKKTNQKGKVLKRR) is disordered. Residues 368–378 (TNQKGKVLKRR) are compositionally biased toward basic residues.

Belongs to the XPG/RAD2 endonuclease family. FEN1 subfamily. Interacts with PCNA. Three molecules of FEN1 bind to one PCNA trimer with each molecule binding to one PCNA monomer. PCNA stimulates the nuclease activity without altering cleavage specificity. The cofactor is Mg(2+). Phosphorylated. Phosphorylation upon DNA damage induces relocalization to the nuclear plasma.

The protein localises to the nucleus. It is found in the nucleolus. Its subcellular location is the nucleoplasm. The protein resides in the mitochondrion. Functionally, structure-specific nuclease with 5'-flap endonuclease and 5'-3' exonuclease activities involved in DNA replication and repair. During DNA replication, cleaves the 5'-overhanging flap structure that is generated by displacement synthesis when DNA polymerase encounters the 5'-end of a downstream Okazaki fragment. It enters the flap from the 5'-end and then tracks to cleave the flap base, leaving a nick for ligation. Also involved in the long patch base excision repair (LP-BER) pathway, by cleaving within the apurinic/apyrimidinic (AP) site-terminated flap. Acts as a genome stabilization factor that prevents flaps from equilibrating into structures that lead to duplications and deletions. Also possesses 5'-3' exonuclease activity on nicked or gapped double-stranded DNA, and exhibits RNase H activity. Also involved in replication and repair of rDNA and in repairing mitochondrial DNA. This chain is Flap endonuclease 1, found in Eremothecium gossypii (strain ATCC 10895 / CBS 109.51 / FGSC 9923 / NRRL Y-1056) (Yeast).